The primary structure comprises 483 residues: Glycogen synthase (483 aa).

K15 is an ADP-alpha-D-glucose binding site.

This sequence belongs to the glycosyltransferase 1 family. Bacterial/plant glycogen synthase subfamily.

It catalyses the reaction [(1-&gt;4)-alpha-D-glucosyl](n) + ADP-alpha-D-glucose = [(1-&gt;4)-alpha-D-glucosyl](n+1) + ADP + H(+). Its pathway is glycan biosynthesis; glycogen biosynthesis. Its function is as follows. Synthesizes alpha-1,4-glucan chains using ADP-glucose. The polypeptide is Glycogen synthase (Exiguobacterium sibiricum (strain DSM 17290 / CCUG 55495 / CIP 109462 / JCM 13490 / 255-15)).